Consider the following 363-residue polypeptide: MSRPQFDPAAYAAQLEDKKARLAGLLAPFAAPAPEVFESPREHYRLRAEFRLWRETGNENRHYAMFEQGDKHTPILIEDFPIASRRINELMPRLKDAWAEPALGFKLFQVEFLTTLAGDALITLCYHRPIDAAWQQAAEALAAELGVSLVGRSRGKRIVVGRDYVEEELLVAGRRFRYRQPEGAFTQPNGEVNQKMLGWAYEALGEREDDLLELYCGNGNFTLPLATRVRKVLATEISKSSVNAALANLADNAVDNVSLVRLSAEELTQALNEVRPFRRLADIDLKSYAFGSVFVDPPRAGMDPDTCELTRRFERILYISCNPETLAQNIAQLHDTHRISRCALFDQFPYTHHMESGVLLERR.

5 residues coordinate S-adenosyl-L-methionine: Q187, Y215, N220, E236, and D296. C321 acts as the Nucleophile in catalysis. The active-site Proton acceptor is the E355.

This sequence belongs to the class I-like SAM-binding methyltransferase superfamily. RNA M5U methyltransferase family. TrmA subfamily.

The catalysed reaction is uridine(54) in tRNA + S-adenosyl-L-methionine = 5-methyluridine(54) in tRNA + S-adenosyl-L-homocysteine + H(+). The enzyme catalyses uridine(341) in tmRNA + S-adenosyl-L-methionine = 5-methyluridine(341) in tmRNA + S-adenosyl-L-homocysteine + H(+). In terms of biological role, dual-specificity methyltransferase that catalyzes the formation of 5-methyluridine at position 54 (m5U54) in all tRNAs, and that of position 341 (m5U341) in tmRNA (transfer-mRNA). The chain is tRNA/tmRNA (uracil-C(5))-methyltransferase from Pseudomonas paraeruginosa (strain DSM 24068 / PA7) (Pseudomonas aeruginosa (strain PA7)).